The primary structure comprises 333 residues: Tetraacyldisaccharide 4'-kinase (333 aa).

An ATP-binding site is contributed by 55–62; it reads TAGGNGKT.

The protein belongs to the LpxK family.

The enzyme catalyses a lipid A disaccharide + ATP = a lipid IVA + ADP + H(+). The protein operates within glycolipid biosynthesis; lipid IV(A) biosynthesis; lipid IV(A) from (3R)-3-hydroxytetradecanoyl-[acyl-carrier-protein] and UDP-N-acetyl-alpha-D-glucosamine: step 6/6. In terms of biological role, transfers the gamma-phosphate of ATP to the 4'-position of a tetraacyldisaccharide 1-phosphate intermediate (termed DS-1-P) to form tetraacyldisaccharide 1,4'-bis-phosphate (lipid IVA). The polypeptide is Tetraacyldisaccharide 4'-kinase (Pectobacterium atrosepticum (strain SCRI 1043 / ATCC BAA-672) (Erwinia carotovora subsp. atroseptica)).